A 330-amino-acid chain; its full sequence is Aspartate--ammonia ligase (330 aa).

It belongs to the class-II aminoacyl-tRNA synthetase family. AsnA subfamily.

It is found in the cytoplasm. The enzyme catalyses L-aspartate + NH4(+) + ATP = L-asparagine + AMP + diphosphate + H(+). It participates in amino-acid biosynthesis; L-asparagine biosynthesis; L-asparagine from L-aspartate (ammonia route): step 1/1. In Escherichia coli O17:K52:H18 (strain UMN026 / ExPEC), this protein is Aspartate--ammonia ligase.